A 1140-amino-acid polypeptide reads, in one-letter code: Rho GTPase-activating protein gacF (1140 aa).

Disordered regions lie at residues 1 to 145 (MKTH…KPSR), 189 to 236 (ESDI…IEPI), 455 to 504 (INNN…STSF), 520 to 644 (EVQQ…GLES), 661 to 700 (ESSK…DEDE), 720 to 759 (ETND…NNIS), 773 to 927 (AKVT…STLS), and 952 to 1095 (TSSP…NHTN). Composition is skewed to low complexity over residues 10 to 26 (LGGL…LKSF) and 35 to 71 (QQQQ…ASSS). Residues 28–55 (TEEVIHEQQQQQQQHNNNNNNNNNHQRQ) are a coiled coil. Residues 72-82 (IEETSGYLSKT) are compositionally biased toward polar residues. Low complexity-rich tracts occupy residues 83–136 (SSSS…TSSP) and 193–222 (DNGS…SSSS). In terms of domain architecture, Rho-GAP spans 234–409 (EPISQSTEDY…RLIENYHSIF (176 aa)). Composition is skewed to low complexity over residues 456–475 (NNNS…SPYK) and 482–493 (PKSSPKLNNRNS). A compositionally biased stretch (polar residues) spans 494–504 (ISPKLSSSTSF). The stretch at 517-548 (ISDEVQQEQQNQQQQQDEQQDEQQDEQQDEQQ) forms a coiled coil. Low complexity predominate over residues 520–533 (EVQQEQQNQQQQQD). Residues 534–549 (EQQDEQQDEQQDEQQD) show a composition bias toward acidic residues. Over residues 550 to 566 (EQNSNSTSINTSSSSIT) the composition is skewed to low complexity. The span at 572–596 (STVQYLNRINTCRRPSSWTNNNRIK) shows a compositional bias: polar residues. A compositionally biased stretch (basic residues) spans 597–606 (QQQHHHHHHQ). Low complexity predominate over residues 607–631 (QQQQHQQHQQQQSSSSESNSSLTSS). Composition is skewed to polar residues over residues 632-641 (PQKRLNSVNG) and 672-684 (NRQM…NNIG). A compositionally biased stretch (low complexity) spans 724 to 759 (DNNNNDQINNSNSSNNIPKTTITTTTNNTTTTNNIS). Positions 773–796 (AKVTPTPTPAPMQTSSFLSTKQTN) are enriched in polar residues. Positions 797–822 (SPSSSSSPSSTVSSTSSSPSSSLSSS) are enriched in low complexity. Residues 823–854 (IDNKTMSNVNYNRFQPANRTVSSPNVRNFSVP) are compositionally biased toward polar residues. Low complexity-rich tracts occupy residues 891–914 (KPKN…NSTP), 952–1058 (TSSP…TSST), and 1065–1079 (HSNS…SSSS).

It is found in the cytoplasm. In terms of biological role, rho GTPase-activating protein involved in the signal transduction pathway. The protein is Rho GTPase-activating protein gacF (gacF) of Dictyostelium discoideum (Social amoeba).